The chain runs to 74 residues: UPF0346 protein YozE (74 aa).

This sequence belongs to the UPF0346 family.

This is UPF0346 protein YozE (yozE) from Bacillus subtilis (strain 168).